Here is a 500-residue protein sequence, read N- to C-terminus: Cytochrome P450 monooxygenase hepD (500 aa).

Residues 15 to 35 traverse the membrane as a helical segment; it reads WILLSLSLAFIVVYSLFYLAV. Asn-99, Asn-185, Asn-373, and Asn-409 each carry an N-linked (GlcNAc...) asparagine glycan. Residue Cys-445 coordinates heme. An N-linked (GlcNAc...) asparagine glycan is attached at Asn-482.

Belongs to the cytochrome P450 family. It depends on heme as a cofactor.

Its subcellular location is the membrane. It functions in the pathway secondary metabolite biosynthesis. Functionally, cytochrome P450 monooxygenase; part of the gene cluster that mediates the biosynthesis of heptelidic acid (HA), a sesquiterpene lactone that acts as an inhibitor of glyceraldehyde-3-phosphatedehydrogenase (GAPDH) and a growth inhibitor of the salt-tolerant lactic acid bacteria in soy sauce brewing. This is Cytochrome P450 monooxygenase hepD from Aspergillus oryzae (strain ATCC 42149 / RIB 40) (Yellow koji mold).